We begin with the raw amino-acid sequence, 1624 residues long: MRLWSWVLRLGLLSAALGCGLAERPRRVRRDPRAVRPPRPAAGPATCATRAARGRRASPPPPPGGAWEAVRVPRRRQQRAARGAEEPSPPSRALYFSGRGEQLRLRADLELPRDAFTLQVWLRAEGGQKSPAVITGLYDKCSYTSRDRGWVMGIHTTSDQGNRDPRYFFSLKTDRARKVTTIDAHRSYLPGQWVHLAATYDGRLMKLYMNGAQVATSAEQVGGIFSPLTQKCKVLMLGGSALNHNFRGHIEHFSLWKVARTQREIVSDMETRGLHTPLPQLLLQENWDNVKRTWSPMKDGNSPQVEFSNAHGFLLDTNLEPPLCGQTLCDNTEVISSYNQLPSFRQPKVVRYRVVNIYDDHHENPTVSWQQIDFQHQQLAEAFQHYNISWELEVLNINSSSLRHRLILANCDISKIGDEKCDPECNHTLTGHDGGDCRQLRYPAFMKKQQNGVCDMDCNYERFNFDGGECCDPDITDVTKTCFDPDSPHRAYLDVNELKNILRLDGSTHLNIFFANSSEEELAGVATWPWDKEALMHLGGIVLNPSFYGIPGHTHTMIHEIGHSLGLYHIFRGISEIQSCSDPCMETEPSFETGDLCNDTNPAPKHKFCGDPGPGNDTCGFHGFFNTPYNNFMSYADDDCTDSFTPNQVSRMHCYLDLVYQSWQPSRKPAPVALAPQVVGHTMDSVMLEWFPPIDGHFFERELGSACDLCLEGRILVQYAFNASSPMPCGPSGHWSPREAEGHPDVEQPCKSSVRTWSPNSAVNPHTVPPACPEPQGCYLELEFRYPLVPESLTIWVTFVSSDWDSSGAVNDIKLLTISGKNISLGPQNVFCDIPLTIRLRDVGEEVYGIQIYTLDEHLEIDAAMLTSTVDSPLCLQCKPLQYKVLRDPPLLEDVASLLHLNRRFMDTDLKLGSVYQYRIITISGNEESEPSPAAIYTHGSGYCGDGVIQKDQGEECDDMNKVNGDGCSLFCKQEVSFNCIDEPSRCYFHDGDGMCEEFEQKTSIKDCGVYTPQGFLDQWASNASVSHQDQQCPGWVVIGQPAASQVCRTKVIDLSEGISQHAWYPCTITYPYYHLPQTTFWLQTYFSQPMVAAAVIIHLVTDGTYYGDQKQETISVQLLDTKDQSHDLGLHVLSCRNNPLIIPVVHDLSQPFYHSQAVHVSFSSPLVAISGVALRSFDNFDPVTLSSCQRGETYSPAEQSCVHFACQAADCPELAVGNASLNCSSNHHYHGAQCTVSCQTGYVLQIQRDDELIKSQVGPSITVTCTEGKWNKQVACEPVDCGIPDHHHVYAASFSCPEGTTFGRRCSFQCRHPAQLKGNNSFLTCMEDGLWSFPEALCELMCLAPPPVPNADLQTARCRENKHKVGSFCKYKCKPGYHVPGSSRKSKKRAFKTQCTQDGSWQEGTCVPVTCDPPPPKFHGLYQCTNGFQFNSECRIKCEDSDASQGRGSNIIHCRKDGTWSGSFHVCREMQGQCSAPNQLNSNLKLQCPDGYAIGSECAISCLDHNSESIILPVNLTVRDIPHWMNPTRVQRIVCTAGLQWYPHPALIHCVKGCEPFMGDNYCDAINNRAFCNYDGGDCCTSTVKTKKVTPFPMSCDLQNDCACRDPEAQEHNRKDLRGYSHG.

The N-terminal stretch at 1 to 22 is a signal peptide; the sequence is MRLWSWVLRLGLLSAALGCGLA. Residues 23–81 constitute a propeptide that is removed on maturation; sequence ERPRRVRRDPRAVRPPRPAAGPATCATRAARGRRASPPPPPGGAWEAVRVPRRRQQRAA. The disordered stretch occupies residues 28 to 93; sequence VRRDPRAVRP…AEEPSPPSRA (66 aa). Residues 42 to 51 are compositionally biased toward low complexity; it reads AGPATCATRA. 17 cysteine pairs are disulfide-bonded: Cys141/Cys232, Cys324/Cys619, Cys329/Cys654, Cys411/Cys425, Cys421/Cys437, Cys454/Cys470, Cys471/Cys482, Cys580/Cys597, Cys584/Cys609, Cys707/Cys875, Cys710/Cys878, Cys750/Cys832, Cys772/Cys778, Cys944/Cys972, Cys957/Cys968, Cys980/Cys987, and Cys996/Cys1008. The tract at residues 272 to 583 is metalloprotease; sequence RGLHTPLPQL…ISEIQSCSDP (312 aa). Asn387 and Asn398 each carry an N-linked (GlcNAc...) asparagine glycan. Asn426 carries N-linked (GlcNAc...) asparagine glycosylation. N-linked (GlcNAc...) asparagine glycosylation occurs at Asn516. Residue His559 participates in Zn(2+) binding. Glu560 is a catalytic residue. Zn(2+) contacts are provided by His563 and His569. N-linked (GlcNAc...) asparagine glycosylation is found at Asn598, Asn616, and Asn722. N-linked (GlcNAc...) asparagine glycosylation occurs at Asn822. A glycan (N-linked (GlcNAc...) asparagine) is linked at Asn1023. Intrachain disulfides connect Cys1033-Cys1067, Cys1048-Cys1136, Cys1189-Cys1202, Cys1212-Cys1266, Cys1224-Cys1235, Cys1239-Cys1277, Cys1282-Cys1326, Cys1297-Cys1307, Cys1311-Cys1339, Cys1343-Cys1396, Cys1359-Cys1370, Cys1374-Cys1407, Cys1412-Cys1455, Cys1425-Cys1435, Cys1439-Cys1468, Cys1475-Cys1536, Cys1489-Cys1499, Cys1503-Cys1551, and Cys1555-Cys1573. 5 consecutive Sushi domains span residues 1210-1279, 1280-1341, 1342-1409, 1410-1470, and 1473-1553; these read ADCP…ACEP, VDCG…LCEL, MCLA…TCVP, VTCD…VCRE, and GQCS…HCVK. 2 N-linked (GlcNAc...) asparagine glycosylation sites follow: Asn1219 and Asn1223. An N-linked (GlcNAc...) asparagine glycan is attached at Asn1320. A glycan (N-linked (GlcNAc...) asparagine) is linked at Asn1516.

It belongs to the peptidase M43B family. Homodimer; disulfide-linked. In pregnancy serum, predominantly found as a disulfide-linked 2:2 heterotetramer with the proform of PRG2. Zn(2+) is required as a cofactor. Detected in kidney, spleen, brain, ovary, breast, skin, prostate, uterus, and placenta.

It localises to the secreted. The enzyme catalyses Cleavage of the 135-Met-|-Lys-136 bond in insulin-like growth factor binding protein (IGFBP)-4, and the 143-Ser-|-Lys-144 bond in IGFBP-5.. In terms of biological role, metalloproteinase which specifically cleaves IGFBP-4 and IGFBP-5, resulting in release of bound IGF. Cleavage of IGFBP-4 is dramatically enhanced by the presence of IGF, whereas cleavage of IGFBP-5 is slightly inhibited by the presence of IGF. Isoform 2 cleaves IGFBP-4 very slowly compared to PAPP-A, but its ability to cleave IGFBP-5 is unaffected. The sequence is that of Pappalysin-1 (Pappa) from Mus musculus (Mouse).